The sequence spans 127 residues: Fluoride-specific ion channel FluC (127 aa).

A run of 4 helical transmembrane segments spans residues 4–24 (LDYLTIAFGGAIGAVLRYLVS), 39–59 (GTIIVNSVGSFFLSFLMFAAI), 68–88 (AILFFGTGLLGAFTTFSTFTY), and 102–122 (VAYALANLLFAFTCAYFGMIL). The Na(+) site is built by Gly-78 and Thr-81.

Belongs to the fluoride channel Fluc/FEX (TC 1.A.43) family.

The protein localises to the cell inner membrane. It carries out the reaction fluoride(in) = fluoride(out). Its activity is regulated as follows. Na(+) is not transported, but it plays an essential structural role and its presence is essential for fluoride channel function. Its function is as follows. Fluoride-specific ion channel. Important for reducing fluoride concentration in the cell, thus reducing its toxicity. The polypeptide is Fluoride-specific ion channel FluC (Thermotoga maritima (strain ATCC 43589 / DSM 3109 / JCM 10099 / NBRC 100826 / MSB8)).